A 715-amino-acid polypeptide reads, in one-letter code: MSFQGTSSGSSHSSKSKLNQVVQNFFSKATQVVVQARLNPRLREQRQSGDKHKLNKWFNLETDELEAYREDLKLWRTIDIYNMDKMPPVVVETYLDMRHLSPNQTLVLEDAFGKRWNASFGGRKTEVVLERWVIEIQRPDPQAGGATTSPASSTELPMAYKKCILLFRSLYTYCRLLPAWTLQKRLSKSKLSTSPLRIGCRVLNGSQPISSRGRVGLSKLIAGSSESQHLQTFSFDPVEIPSGVFKISVSYRVNCNFAVDDSEAMLSSQFLRIDEEKPVVPPSPPVKHPSMAAPNLHYITGLPRRHSHSQGVGVSGAAIVPTSVSSVTDYMERRRSSGASGVGATGGGLAGTSGGSGGVSGGVSGGSGGSGGSGGWGGEEGSPGPAATSASPSTPPFARVPSSSSLAALRIPRRTISNSSTSSTNNARVVTTPGYTPSAYEQAISSSGGSSRSGSVPKYSSSFGTRQWNRSGSISSTRRRNSMLVGSAESAMSSGSSLMEPGSGFIDIEDPTDVSDFVKMVDSIKPGSPYSLPSPRKGSDPLARFQQLKGSHAGIADSITSSIYHHQPSPPYVRSKLSGEANLEAISSLPRPVTVPPSPRKLETQMQPISLADQHTSEYHQLQQRTSARPQAHSYSERDQLDNSHYKALERYDLVGASPSVVGSRYYTEHDRGRGEKRYSVAPLPGLEFDEDDDLLFAMSDMAMGDSASGGNVRT.

Positions 329 to 510 (DYMERRRSSG…PGSGFIDIED (182 aa)) are disordered. The span at 340 to 381 (SGVGATGGGLAGTSGGSGGVSGGVSGGSGGSGGSGGWGGEEG) shows a compositional bias: gly residues. Low complexity-rich tracts occupy residues 382–392 (SPGPAATSASP), 414–432 (RTISNSSTSSTNNARVVTT), and 445–455 (SSSGGSSRSGS). The span at 458 to 476 (KYSSSFGTRQWNRSGSISS) shows a compositional bias: polar residues. The segment covering 486–500 (GSAESAMSSGSSLME) has biased composition (low complexity).

Belongs to the ATG13 family. Fungi subfamily. Interacts with ATG1 to form the ATG1-ATG13 kinase complex.

Its subcellular location is the cytoplasm. The protein localises to the preautophagosomal structure. Its function is as follows. Activates the ATG1 kinase in a nutritional condition dependent manner through the TOR pathway, leading to autophagy. Also involved in cytoplasm to vacuole transport (Cvt) and more specifically in Cvt vesicle formation. Seems to play a role in the switching machinery regulating the conversion between the Cvt pathway and autophagy. Finally, ATG13 is also required for glycogen storage during stationary phase. This chain is Autophagy-related protein 13 (ATG13), found in Yarrowia lipolytica (strain CLIB 122 / E 150) (Yeast).